A 241-amino-acid polypeptide reads, in one-letter code: Demethylmenaquinone methyltransferase (241 aa).

Residues threonine 60, aspartate 81, and 106–107 each bind S-adenosyl-L-methionine; that span reads DA.

Belongs to the class I-like SAM-binding methyltransferase superfamily. MenG/UbiE family.

It carries out the reaction a 2-demethylmenaquinol + S-adenosyl-L-methionine = a menaquinol + S-adenosyl-L-homocysteine + H(+). The protein operates within quinol/quinone metabolism; menaquinone biosynthesis; menaquinol from 1,4-dihydroxy-2-naphthoate: step 2/2. In terms of biological role, methyltransferase required for the conversion of demethylmenaquinol (DMKH2) to menaquinol (MKH2). This chain is Demethylmenaquinone methyltransferase, found in Staphylococcus epidermidis (strain ATCC 35984 / DSM 28319 / BCRC 17069 / CCUG 31568 / BM 3577 / RP62A).